Reading from the N-terminus, the 465-residue chain is 3-isopropylmalate dehydratase large subunit (465 aa).

Residues Cys347, Cys407, and Cys410 each contribute to the [4Fe-4S] cluster site.

This sequence belongs to the aconitase/IPM isomerase family. LeuC type 1 subfamily. As to quaternary structure, heterodimer of LeuC and LeuD. [4Fe-4S] cluster serves as cofactor.

It carries out the reaction (2R,3S)-3-isopropylmalate = (2S)-2-isopropylmalate. Its pathway is amino-acid biosynthesis; L-leucine biosynthesis; L-leucine from 3-methyl-2-oxobutanoate: step 2/4. Functionally, catalyzes the isomerization between 2-isopropylmalate and 3-isopropylmalate, via the formation of 2-isopropylmaleate. In Aeromonas salmonicida (strain A449), this protein is 3-isopropylmalate dehydratase large subunit.